The following is a 224-amino-acid chain: Homeobox protein Hox-B6 (224 aa).

Residues 127 to 132 carry the Antp-type hexapeptide motif; the sequence is VYPWMQ. A DNA-binding region (homeobox) is located at residues 146 to 205; sequence GRRGRQTYTRYQTLELEKEFHYNRYLTRRRRIEIAHALCLTERQIKIWFQNRRMKWKKES. Ser-214 bears the Phosphoserine mark.

This sequence belongs to the Antp homeobox family.

It localises to the nucleus. Its function is as follows. Sequence-specific transcription factor which is part of a developmental regulatory system that provides cells with specific positional identities on the anterior-posterior axis. This is Homeobox protein Hox-B6 (Hoxb6) from Mus musculus (Mouse).